The chain runs to 798 residues: Putative antiporter subunit mnhA2 (798 aa).

21 consecutive transmembrane segments (helical) span residues 1–21 (MSLV…LFTL), 33–53 (IALL…PSVM), 78–98 (GLSL…VYYA), 109–129 (LPRF…IVTA), 133–153 (ILMY…IVYW), 167–187 (FMIT…IYIV), 209–229 (FIPI…QFPF), 241–261 (TPVS…FLLF), 272–292 (FYIY…AVNA), 300–320 (AILA…VGLG), 337–357 (MILF…GALF), 381–401 (VFPI…GIPF), 431–451 (IITV…VYMI), 472–492 (PFLF…IFFI), 526–546 (GFNL…IMAL), 593–613 (ITIT…QAGF), 625–645 (GPIE…LTFI), 649–669 (LTMV…FILM), 674–694 (LALT…VSFS), 710–730 (AVKI…VFIA), and 766–786 (IDTL…YTLL).

The protein belongs to the CPA3 antiporters (TC 2.A.63) subunit A family. In terms of assembly, may form a heterooligomeric complex that consists of seven subunits: mnhA2, mnhB2, mnhC2, mnhD2, mnhE2, mnhF2 and mnhG2.

It localises to the cell membrane. The chain is Putative antiporter subunit mnhA2 (mnhA2) from Staphylococcus saprophyticus subsp. saprophyticus (strain ATCC 15305 / DSM 20229 / NCIMB 8711 / NCTC 7292 / S-41).